The chain runs to 680 residues: Methionine--tRNA ligase (680 aa).

The short motif at 15–25 is the 'HIGH' region element; sequence PYANGPVHIGH. 4 residues coordinate Zn(2+): C147, C150, C160, and C163. Positions 332–336 match the 'KMSKS' region motif; the sequence is KISTS. ATP is bound at residue T335. In terms of domain architecture, tRNA-binding spans 578 to 680; that stretch reads EFEKLDIRVG…REVKPGSEVK (103 aa).

The protein belongs to the class-I aminoacyl-tRNA synthetase family. MetG type 1 subfamily. Homodimer. Zn(2+) serves as cofactor.

The protein localises to the cytoplasm. It carries out the reaction tRNA(Met) + L-methionine + ATP = L-methionyl-tRNA(Met) + AMP + diphosphate. Is required not only for elongation of protein synthesis but also for the initiation of all mRNA translation through initiator tRNA(fMet) aminoacylation. The sequence is that of Methionine--tRNA ligase from Phocaeicola vulgatus (strain ATCC 8482 / DSM 1447 / JCM 5826 / CCUG 4940 / NBRC 14291 / NCTC 11154) (Bacteroides vulgatus).